The sequence spans 173 residues: Lens fiber membrane intrinsic protein (173 aa).

The Cytoplasmic portion of the chain corresponds to 1–3 (MYS). Residues 4–24 (FMGGGLFCAWVGTILLVVATA) form a helical membrane-spanning segment. At 25–66 (TDHWMQYRLSGSFAHQGLWRYCLGNKCFLQTESIAYWNATRA) the chain is on the extracellular side. C-linked (Man) tryptophan glycosylation is found at Trp43 and Trp61. The N-linked (GlcNAc...) asparagine glycan is linked to Asn62. A helical membrane pass occupies residues 67-87 (FMILSALCATSGIIMGVLAFA). Residues 88-98 (QQSTFTRLSRP) lie on the Cytoplasmic side of the membrane. The helical transmembrane segment at 99-119 (FSAGIMFFASTLFVLLALAIY) threads the bilayer. Residues 120–140 (TGVTVSFLGRRFGDWRFSWSY) lie on the Extracellular side of the membrane. Residues 141-161 (ILGWVALLMTFFAGIFYMCAY) form a helical membrane-spanning segment. Residues 162–173 (RMHECRRLSTPR) are Cytoplasmic-facing. Ser170 is subject to Phosphoserine. Thr171 bears the Phosphothreonine mark.

Belongs to the PMP-22/EMP/MP20 family. Seems to be associated with itself or another lens membrane component via disulfide bonds. As to expression, eye lens specific.

It localises to the membrane. Functionally, present in the thicker 16-17 nm junctions of mammalian lens fiber cells, where it may contribute to cell junctional organization. Acts as a receptor for calmodulin. May play an important role in both lens development and cataractogenesis. This chain is Lens fiber membrane intrinsic protein (Lim2), found in Rattus norvegicus (Rat).